Consider the following 293-residue polypeptide: Probable adenylate kinase 1, chloroplastic (293 aa).

A mitochondrion-targeting transit peptide spans M1–R26. G70–T75 is a binding site for ATP. An NMP region spans residues A90–V119. AMP contacts are provided by residues T91, R96, K117–V119, G147–R150, and Q154. Positions G183–D231 are LID. ATP is bound by residues R184 and N193 to F194. Residues R228 and R239 each contribute to the AMP site.

This sequence belongs to the adenylate kinase family.

The protein localises to the mitochondrion. The catalysed reaction is AMP + ATP = 2 ADP. Functionally, catalyzes the reversible transfer of the terminal phosphate group between ATP and AMP. Plays an important role in cellular energy homeostasis and in adenine nucleotide metabolism. This is Probable adenylate kinase 1, chloroplastic from Oryza sativa subsp. japonica (Rice).